A 215-amino-acid polypeptide reads, in one-letter code: High mobility group protein B1 (215 aa).

Positions P9–V79 form a DNA-binding region, HMG box 1. Cysteine sulfonic acid (-SO3H); alternate is present on C23. A disulfide bridge connects residues C23 and C45. Positions H27 to K43 are NLS 1. Positions H27–K43 match the Nuclear localization signal (NLS) 1 motif. Residue C45 is modified to Cysteine sulfonic acid (-SO3H); alternate. The segment at M75–P95 is disordered. Over residues G83–A94 the composition is skewed to basic and acidic residues. The segment at residues P95 to R163 is a DNA-binding region (HMG box 2). C106 is modified (cysteine sulfonic acid (-SO3H)). Residues G166–E179 show a composition bias toward basic and acidic residues. The disordered stretch occupies residues G166–E215. The segment at A178–K184 is NLS 2. Positions A178–K184 match the Nuclear localization signal (NLS) 2 motif. Residues E187 to E215 are compositionally biased toward acidic residues. Residues E196–D210 are involved in intramolecular interaction with K-3. The tract at residues D211–E215 is involved in interaction with histone H3.

Belongs to the HMGB family. In terms of processing, reduction/oxidation of cysteine residues Cys-23, Cys-45 and Cys-106 and a possible intramolecular disulfide bond involving Cys-23 and Cys-45 give rise to different redox forms with specific functional activities: 1- fully reduced HMGB1 (HMGB1C23hC45hC106h), 2- disulfide HMGB1 (HMGB1C23-C45C106h) and 3- sulfonyl HMGB1 (HMGB1C23soC45soC106so).

It localises to the nucleus. The protein resides in the chromosome. Its subcellular location is the cytoplasm. The protein localises to the secreted. Its function is as follows. Multifunctional redox sensitive protein with various roles in different cellular compartments. Nuclear functions are attributed to fully reduced HGMB1. Associates with chromatin and binds DNA with a preference to non-canonical DNA structures such as single-stranded DNA, DNA-containing cruciforms or bent structures, supercoiled DNA and ZDNA. Can bent DNA and enhance DNA flexibility by looping thus providing a mechanism to promote activities on various gene promoters. Can restructure the canonical nucleosome. Proposed to be an universal biosensor for nucleic acids. May promote inflammatory response to sterile and infectious signals and may be involved in the coordination and integration of innate and adaptive immune responses. In the cytoplasm may function as sensor and/or chaperone for immunogenic nucleic acids, and mediate autophagy. May act as danger associated molecular pattern (DAMP) molecule that amplifies immune responses during tissue injury. In Gallus gallus (Chicken), this protein is High mobility group protein B1 (HMGB1).